The chain runs to 519 residues: Probable cytochrome P450 513D1 (519 aa).

Residues 1–21 (MGISSIIIILFIIVLLKKLIK) traverse the membrane as a helical segment. Cysteine 464 lines the heme pocket.

The protein belongs to the cytochrome P450 family. It depends on heme as a cofactor.

Its subcellular location is the membrane. The chain is Probable cytochrome P450 513D1 (cyp513D1) from Dictyostelium discoideum (Social amoeba).